Consider the following 166-residue polypeptide: Transmembrane protein 190 (166 aa).

A signal peptide spans 1 to 21 (MVGSGISALGLLLLMQGSVDA). Residues 22–81 (NGIQGFFYPWSCEGDVWDRESCGGQAAIENPNLCLRLRCCYRDGVCYHQRPDENMRRKHM) are Extracellular-facing. The P-type domain maps to 31–71 (WSCEGDVWDRESCGGQAAIENPNLCLRLRCCYRDGVCYHQR). Disulfide bonds link Cys-33-Cys-61, Cys-43-Cys-60, and Cys-55-Cys-67. Residues 82–102 (WALGWTCGSLLFLITSICLFW) traverse the membrane as a helical segment. Topologically, residues 103–166 (WARRQDMLHL…VSGEDTGGEE (64 aa)) are cytoplasmic. The tract at residues 130 to 166 (LSKDRRSANKSTTVLQSPGGEVETAAAVSGEDTGGEE) is disordered.

In terms of tissue distribution, detected in testis and in a mixture of spermatogenic cells at various stages (testicular germ cells). Not detected in heart, brain, spleen, lung, liver, skeletal muscle and kidney.

The protein resides in the membrane. In Mus musculus (Mouse), this protein is Transmembrane protein 190 (Tmem190).